Consider the following 81-residue polypeptide: Beta-toxin Ct13 (81 aa).

The N-terminal stretch at 1–18 (MKVLILIIASVLLIGVEC) is a signal peptide. Positions 19 to 78 (KDGFPVDSEGCILLPCATRAYCSVNCKFMKGSGGSCDTLACHCKGLPEDAKVQDKPTNKC) constitute an LCN-type CS-alpha/beta domain. 4 disulfide bridges follow: Cys29-Cys78, Cys34-Cys54, Cys40-Cys59, and Cys44-Cys61. The residue at position 78 (Cys78) is a Cysteine amide.

It belongs to the long (4 C-C) scorpion toxin superfamily. Sodium channel inhibitor family. Beta subfamily. In terms of tissue distribution, expressed by the venom gland.

It is found in the secreted. Functionally, beta toxins bind voltage-independently at site-4 of sodium channels (Nav) and shift the voltage of activation toward more negative potentials thereby affecting sodium channel activation and promoting spontaneous and repetitive firing. This is Beta-toxin Ct13 from Centruroides tecomanus (Scorpion).